A 44-amino-acid polypeptide reads, in one-letter code: Photosystem II reaction center protein K (44 aa).

A propeptide spanning residues methionine 1–serine 7 is cleaved from the precursor. The helical transmembrane segment at leucine 23–phenylalanine 43 threads the bilayer.

The protein belongs to the PsbK family. In terms of assembly, PSII is composed of 1 copy each of membrane proteins PsbA, PsbB, PsbC, PsbD, PsbE, PsbF, PsbH, PsbI, PsbJ, PsbK, PsbL, PsbM, PsbT, PsbX, PsbY, PsbZ, Psb30/Ycf12, at least 3 peripheral proteins of the oxygen-evolving complex and a large number of cofactors. It forms dimeric complexes.

It localises to the plastid. Its subcellular location is the chloroplast thylakoid membrane. Functionally, one of the components of the core complex of photosystem II (PSII). PSII is a light-driven water:plastoquinone oxidoreductase that uses light energy to abstract electrons from H(2)O, generating O(2) and a proton gradient subsequently used for ATP formation. It consists of a core antenna complex that captures photons, and an electron transfer chain that converts photonic excitation into a charge separation. The polypeptide is Photosystem II reaction center protein K (Phaeodactylum tricornutum (strain CCAP 1055/1)).